The primary structure comprises 122 residues: Large ribosomal subunit protein uL14 (122 aa).

It belongs to the universal ribosomal protein uL14 family. As to quaternary structure, part of the 50S ribosomal subunit. Forms a cluster with proteins L3 and L19. In the 70S ribosome, L14 and L19 interact and together make contacts with the 16S rRNA in bridges B5 and B8.

Its function is as follows. Binds to 23S rRNA. Forms part of two intersubunit bridges in the 70S ribosome. In Desulforamulus reducens (strain ATCC BAA-1160 / DSM 100696 / MI-1) (Desulfotomaculum reducens), this protein is Large ribosomal subunit protein uL14.